The primary structure comprises 1035 residues: Probable LRR receptor-like serine/threonine-protein kinase At1g53440 (1035 aa).

Residues 1-26 form the signal peptide; the sequence is MGFFFSTRKGLLLIIFICLDIFGSNA. The Extracellular portion of the chain corresponds to 27–607; the sequence is QLLPEDEVQT…VDTGKPLSNG (581 aa). Residues Asn46, Asn75, Asn83, and Asn110 are each glycosylated (N-linked (GlcNAc...) asparagine). LRR repeat units follow at residues 87–110, 111–135, 137–158, 160–182, 183–206, 208–232, and 234–254; these read VCRVTNIQLRGFNLRGIIPPEFGN, LTRLTEIDLVLNFLSGTIPTTLSQI, LEILAVTGNRLSGPFPPQLGQI, TLTDVIMESNLFTGQLPPNLGNL, RSLKRLLISSNNITGRIPESLSNL, NLTNFRIDGNSLSGKIPDFIGNWTR, and VRLDLQGTSMEGPIPASISNL. Asn194, Asn208, and Asn229 each carry an N-linked (GlcNAc...) asparagine glycan. N-linked (GlcNAc...) asparagine glycans are attached at residues Asn256 and Asn277. LRR repeat units lie at residues 278 to 302, 303 to 326, 328 to 349, and 350 to 372; these read MTNMERLVLRNCLIREPIPEYIGTS, MTMLKLLDLSSNMLNGTIPDTFRS, NAFNFMYLNNNSLTGPVPQFIL, and DSKQNIDLSYNNFTQPPTLSCNQ. N-linked (GlcNAc...) asparagine glycosylation is found at Asn317, Asn337, Asn361, Asn386, Asn469, and Asn559. Residues 608-628 form a helical membrane-spanning segment; that stretch reads VVAGIVIAACVAFGLLVLVIL. The Cytoplasmic segment spans residues 629-1035; that stretch reads RLTGYLGGKE…LDDLTDVEIE (407 aa). A Phosphothreonine modification is found at Thr656. The region spanning 667-948 is the Protein kinase domain; sequence FDPENKIGEG…QGKIKVQPPL (282 aa). Residues 673–681 and Lys695 each bind ATP; that span reads IGEGGFGPV. At Tyr740 the chain carries Phosphotyrosine. The Proton acceptor role is filled by Asp793. Position 826 is a phosphoserine (Ser826). Phosphothreonine occurs at positions 827 and 832. At Tyr840 the chain carries Phosphotyrosine. Residues 969–1035 form a disordered region; sequence LSQDSESQVS…LDDLTDVEIE (67 aa). The segment covering 972–981 has biased composition (polar residues); the sequence is DSESQVSTYT. Positions 1009–1023 are enriched in low complexity; it reads SLLQQEEGNSSSSSR.

Belongs to the protein kinase superfamily. Ser/Thr protein kinase family.

The protein localises to the cell membrane. The catalysed reaction is L-seryl-[protein] + ATP = O-phospho-L-seryl-[protein] + ADP + H(+). The enzyme catalyses L-threonyl-[protein] + ATP = O-phospho-L-threonyl-[protein] + ADP + H(+). This Arabidopsis thaliana (Mouse-ear cress) protein is Probable LRR receptor-like serine/threonine-protein kinase At1g53440.